We begin with the raw amino-acid sequence, 582 residues long: Choline kinase (582 aa).

The disordered stretch occupies residues 1-36; it reads MVQESRPGSVRSYSVGYQARSRSSSQRRHSLTRQRS. Residue Ser-30 is modified to Phosphoserine; by PKA. Phosphoserine occurs at positions 48 and 51. Position 54 is a phosphothreonine (Thr-54). A Phosphoserine; by PKA modification is found at Ser-85.

It belongs to the choline/ethanolamine kinase family. In terms of assembly, monomer. Interacts with NAP1. It depends on Mg(2+) as a cofactor.

It localises to the cytoplasm. It carries out the reaction choline + ATP = phosphocholine + ADP + H(+). The enzyme catalyses ethanolamine + ATP = phosphoethanolamine + ADP + H(+). It participates in phospholipid metabolism; phosphatidylcholine biosynthesis; phosphocholine from choline: step 1/1. Catalyzes the committed step in the synthesis of phosphatidylcholine by the CDP-choline pathway. Also exhibits ethanolamine kinase activity but it is a poor substrate at 14% efficiency compared with choline. This chain is Choline kinase, found in Saccharomyces cerevisiae (strain ATCC 204508 / S288c) (Baker's yeast).